A 396-amino-acid polypeptide reads, in one-letter code: Pre-mycofactocin synthase (396 aa).

Positions 1–383 (MAEAWFETVA…SPADILVPTG (383 aa)) constitute an FMN hydroxy acid dehydrogenase domain. 4 residues coordinate FMN: S108, Q128, T156, and K254. Catalysis depends on H278, which acts as the Proton acceptor. Residues 309-313 (DGGIR) and 332-333 (GR) each bind FMN.

The protein belongs to the FMN-dependent alpha-hydroxy acid dehydrogenase family. The cofactor is FMN.

The catalysed reaction is 3-amino-5-[(4-hydroxyphenyl)methyl]-4,4-dimethyl-2-pyrrolidin-2-one + O2 + H2O = pre-mycofactocin + H2O2 + NH4(+). Functionally, involved in the biosynthesis of the enzyme cofactor mycofactocin (MFT). Catalyzes the oxidative deamination of AHDP (3-amino-5-[(4-hydroxyphenyl)methyl]-4,4-dimethyl-2-pyrrolidin-2-one), forming an alpha-keto amide moiety on the resulting molecule, which is called pre-mycofactocin (PMFT). This reaction occurs via a 5-[(4-hydroxyphenyl)methyl]-3-imino-4,4-dimethylpyrrolidin-2-one intermediate, which converts to PMFT. The alpha-keto amide moiety is the redox-active center for the redox activity of mycofactocin. The polypeptide is Pre-mycofactocin synthase (mftD) (Mycobacterium tuberculosis (strain CDC 1551 / Oshkosh)).